The primary structure comprises 390 residues: Mannitol-1-phosphate 5-dehydrogenase (390 aa).

7 to 18 (AVHFGGGNIGRG) lines the NAD(+) pocket. Residue lysine 216 is part of the active site.

It belongs to the mannitol dehydrogenase family. In terms of assembly, monomer.

It catalyses the reaction D-mannitol 1-phosphate + NAD(+) = beta-D-fructose 6-phosphate + NADH + H(+). Its function is as follows. Catalyzes the NAD(H)-dependent interconversion of D-fructose 6-phosphate and D-mannitol 1-phosphate in the mannitol metabolic pathway. Required for the process of sporulation on senescing leaf material. The protein is Mannitol-1-phosphate 5-dehydrogenase (mpd1) of Phaeosphaeria nodorum (strain SN15 / ATCC MYA-4574 / FGSC 10173) (Glume blotch fungus).